The primary structure comprises 387 residues: Succinate--CoA ligase [ADP-forming] subunit beta (387 aa).

One can recognise an ATP-grasp domain in the interval 9–236; that stretch reads KELFAKHNVP…RAATDPLELK (228 aa). ATP is bound by residues Lys-45, 52–54, Ser-94, and Glu-99; that span reads GRG. Positions 191 and 205 each coordinate Mg(2+). Residues Asn-256 and 318-320 contribute to the substrate site; that span reads GIT.

The protein belongs to the succinate/malate CoA ligase beta subunit family. In terms of assembly, heterotetramer of two alpha and two beta subunits. The cofactor is Mg(2+).

The enzyme catalyses succinate + ATP + CoA = succinyl-CoA + ADP + phosphate. It catalyses the reaction GTP + succinate + CoA = succinyl-CoA + GDP + phosphate. It participates in carbohydrate metabolism; tricarboxylic acid cycle; succinate from succinyl-CoA (ligase route): step 1/1. Functionally, succinyl-CoA synthetase functions in the citric acid cycle (TCA), coupling the hydrolysis of succinyl-CoA to the synthesis of either ATP or GTP and thus represents the only step of substrate-level phosphorylation in the TCA. The beta subunit provides nucleotide specificity of the enzyme and binds the substrate succinate, while the binding sites for coenzyme A and phosphate are found in the alpha subunit. The chain is Succinate--CoA ligase [ADP-forming] subunit beta from Mycobacterium marinum (strain ATCC BAA-535 / M).